The following is a 188-amino-acid chain: Molybdopterin synthase catalytic subunit (188 aa).

S20 is subject to Phosphoserine. Substrate-binding positions include 143–144 (HR), K159, and 166–168 (KKE).

This sequence belongs to the MoaE family. MOCS2B subfamily. Heterotetramer; composed of 2 small (MOCS2A) and 2 large (MOCS2B) subunits. In terms of tissue distribution, highest levels are found in heart and skeletal muscle. Lower levels are present in brain, kidney and pancreas. Very low levels are found in lung and peripheral blood leukocytes.

The protein localises to the cytoplasm. The protein resides in the cytosol. It carries out the reaction 2 [molybdopterin-synthase sulfur-carrier protein]-C-terminal-Gly-aminoethanethioate + cyclic pyranopterin phosphate + H2O = molybdopterin + 2 [molybdopterin-synthase sulfur-carrier protein]-C-terminal Gly-Gly + 2 H(+). It functions in the pathway cofactor biosynthesis; molybdopterin biosynthesis. Catalytic subunit of the molybdopterin synthase complex, a complex that catalyzes the conversion of precursor Z into molybdopterin. Acts by mediating the incorporation of 2 sulfur atoms from thiocarboxylated MOCS2A into precursor Z to generate a dithiolene group. In Homo sapiens (Human), this protein is Molybdopterin synthase catalytic subunit.